We begin with the raw amino-acid sequence, 292 residues long: MVRSLLLVHAHPDDESISTGATMAYYAAQGVRVTLVTCTLGEEGEILVPDLRLLAADEADQLGGYRISELAAACAALGVTDHRFLGGAGRYRDSGMMGTPANNHPRAFWQADLDTAAAYLVDIIRDVRPQVVITYDENGGYGHPDHIQAHRVTVRAVDQTRDIVTKLYAAAVPRSAFAEGIQALRAAGDTTSFAGVEDVDNVPFVRPDEVITTAIDARAFLDRKIAALRAHATQIAVDGPFFALSNNIGQRAFGVEYYILLRGTAYPAGDGRENDLFAGVDVVQAGDVGAAT.

3 residues coordinate Zn(2+): H11, D14, and H146.

It belongs to the MshB deacetylase family. Requires Zn(2+) as cofactor.

The catalysed reaction is 1D-myo-inositol 2-acetamido-2-deoxy-alpha-D-glucopyranoside + H2O = 1D-myo-inositol 2-amino-2-deoxy-alpha-D-glucopyranoside + acetate. Functionally, catalyzes the deacetylation of 1D-myo-inositol 2-acetamido-2-deoxy-alpha-D-glucopyranoside (GlcNAc-Ins) in the mycothiol biosynthesis pathway. The polypeptide is 1D-myo-inositol 2-acetamido-2-deoxy-alpha-D-glucopyranoside deacetylase (Acidothermus cellulolyticus (strain ATCC 43068 / DSM 8971 / 11B)).